The sequence spans 395 residues: uncharacterized protein (395 aa).

This is an uncharacterized protein from Escherichia coli (strain K12).